Reading from the N-terminus, the 479-residue chain is Ribosomal RNA small subunit methyltransferase F (479 aa).

Residues 125–131, Glu149, Asp176, and Asp194 contribute to the S-adenosyl-L-methionine site; that span reads AAAPGSK. Cys247 acts as the Nucleophile in catalysis.

It belongs to the class I-like SAM-binding methyltransferase superfamily. RsmB/NOP family.

It localises to the cytoplasm. The enzyme catalyses cytidine(1407) in 16S rRNA + S-adenosyl-L-methionine = 5-methylcytidine(1407) in 16S rRNA + S-adenosyl-L-homocysteine + H(+). Specifically methylates the cytosine at position 1407 (m5C1407) of 16S rRNA. This is Ribosomal RNA small subunit methyltransferase F from Escherichia coli O127:H6 (strain E2348/69 / EPEC).